The primary structure comprises 412 residues: Glucose-1-phosphate adenylyltransferase (412 aa).

Residues Tyr98, Gly163, 178–179 (EK), and Ser189 each bind alpha-D-glucose 1-phosphate.

Belongs to the bacterial/plant glucose-1-phosphate adenylyltransferase family. As to quaternary structure, homotetramer.

The enzyme catalyses alpha-D-glucose 1-phosphate + ATP + H(+) = ADP-alpha-D-glucose + diphosphate. It participates in glycan biosynthesis; glycogen biosynthesis. Functionally, involved in the biosynthesis of ADP-glucose, a building block required for the elongation reactions to produce glycogen. Catalyzes the reaction between ATP and alpha-D-glucose 1-phosphate (G1P) to produce pyrophosphate and ADP-Glc. This Thermosipho melanesiensis (strain DSM 12029 / CIP 104789 / BI429) protein is Glucose-1-phosphate adenylyltransferase.